A 405-amino-acid chain; its full sequence is S-adenosylmethionine synthase (405 aa).

ATP is bound at residue 141–146 (GQGSVD).

This sequence belongs to the AdoMet synthase 2 family. Mg(2+) is required as a cofactor.

It carries out the reaction L-methionine + ATP + H2O = S-adenosyl-L-methionine + phosphate + diphosphate. It participates in amino-acid biosynthesis; S-adenosyl-L-methionine biosynthesis; S-adenosyl-L-methionine from L-methionine: step 1/1. Catalyzes the formation of S-adenosylmethionine from methionine and ATP. The chain is S-adenosylmethionine synthase from Methanococcus maripaludis (Methanococcus deltae).